A 444-amino-acid chain; its full sequence is Tubulin beta-4 chain (444 aa).

8 residues coordinate GTP: Gln-11, Glu-69, Ser-138, Gly-142, Thr-143, Gly-144, Asn-204, and Asn-226. Glu-69 contributes to the Mg(2+) binding site.

This sequence belongs to the tubulin family. In terms of assembly, dimer of alpha and beta chains. A typical microtubule is a hollow water-filled tube with an outer diameter of 25 nm and an inner diameter of 15 nM. Alpha-beta heterodimers associate head-to-tail to form protofilaments running lengthwise along the microtubule wall with the beta-tubulin subunit facing the microtubule plus end conferring a structural polarity. Microtubules usually have 13 protofilaments but different protofilament numbers can be found in some organisms and specialized cells. It depends on Mg(2+) as a cofactor.

It is found in the cytoplasm. The protein resides in the cytoskeleton. Tubulin is the major constituent of microtubules, a cylinder consisting of laterally associated linear protofilaments composed of alpha- and beta-tubulin heterodimers. Microtubules grow by the addition of GTP-tubulin dimers to the microtubule end, where a stabilizing cap forms. Below the cap, tubulin dimers are in GDP-bound state, owing to GTPase activity of alpha-tubulin. The sequence is that of Tubulin beta-4 chain (TUBB4) from Arabidopsis thaliana (Mouse-ear cress).